The following is a 627-amino-acid chain: DNA-directed RNA polymerase subunit gamma (627 aa).

Residues C70, C72, C85, and C88 each contribute to the Zn(2+) site. Mg(2+)-binding residues include D468, D470, and D472.

The protein belongs to the RNA polymerase beta' chain family. RpoC1 subfamily. In cyanobacteria the RNAP catalytic core is composed of 2 alpha, 1 beta, 1 beta', 1 gamma and 1 omega subunit. When a sigma factor is associated with the core the holoenzyme is formed, which can initiate transcription. It depends on Mg(2+) as a cofactor. Requires Zn(2+) as cofactor.

The enzyme catalyses RNA(n) + a ribonucleoside 5'-triphosphate = RNA(n+1) + diphosphate. In terms of biological role, DNA-dependent RNA polymerase catalyzes the transcription of DNA into RNA using the four ribonucleoside triphosphates as substrates. The protein is DNA-directed RNA polymerase subunit gamma of Synechococcus sp. (strain JA-2-3B'a(2-13)) (Cyanobacteria bacterium Yellowstone B-Prime).